Consider the following 89-residue polypeptide: Large ribosomal subunit protein bL27 (89 aa).

The disordered stretch occupies residues Met1–Leu21.

Belongs to the bacterial ribosomal protein bL27 family.

The chain is Large ribosomal subunit protein bL27 from Bradyrhizobium sp. (strain BTAi1 / ATCC BAA-1182).